A 298-amino-acid chain; its full sequence is Oligodendrocyte transcription factor 2 (298 aa).

Over residues 1–13 (MDSDASLVSSRPS) the composition is skewed to polar residues. Disordered regions lie at residues 1 to 60 (MDSD…SAEL) and 79 to 102 (SSSS…MTEP). The segment covering 26-41 (NKGGGGGGGGGGGFTG) has biased composition (gly residues). Residues 79-91 (SSSSSASSASSAS) show a composition bias toward low complexity. Residues 106-160 (QLRLKINSRERKRMHDLNIAMDGLREVMPYAHGPSVRKLSKIATLLLARNYILML) enclose the bHLH domain.

Its subcellular location is the nucleus. In terms of biological role, required for oligodendrocyte and motor neuron specification in the spinal cord. This chain is Oligodendrocyte transcription factor 2 (OLIG2), found in Gallus gallus (Chicken).